The primary structure comprises 509 residues: Protein root UVB sensitive 5 (509 aa).

The segment at Cys-22–Asp-49 is disordered.

It belongs to the RUS1 family.

The chain is Protein root UVB sensitive 5 from Arabidopsis thaliana (Mouse-ear cress).